The sequence spans 509 residues: 3-ketoacyl-CoA synthase 11 (509 aa).

The next 2 helical transmembrane spans lie at 36 to 56 (LITH…AAQI) and 75 to 95 (LISV…YFMT). The FAE domain occupies 92 to 381 (YFMTRPRPVY…FFATLVGRKL (290 aa)). Catalysis depends on residues cysteine 236, histidine 315, histidine 399, histidine 403, and asparagine 436.

Belongs to the thiolase-like superfamily. Chalcone/stilbene synthases family. As to expression, only expressed in guard cells. Expressed in siliques, flowers, leaves, stems, roots and seedlings.

It localises to the membrane. The enzyme catalyses a very-long-chain acyl-CoA + malonyl-CoA + H(+) = a very-long-chain 3-oxoacyl-CoA + CO2 + CoA. It functions in the pathway lipid metabolism; fatty acid biosynthesis. In terms of biological role, active on both saturated and mono-unsaturated acyl chains C16 to C20. The sequence is that of 3-ketoacyl-CoA synthase 11 from Arabidopsis thaliana (Mouse-ear cress).